Consider the following 868-residue polypeptide: Leucine--tRNA ligase (868 aa).

Positions 42-52 (PYPSGKLHMGH) match the 'HIGH' region motif. Residues 627–631 (KMAKS) carry the 'KMSKS' region motif. Lys-630 is an ATP binding site.

The protein belongs to the class-I aminoacyl-tRNA synthetase family.

It localises to the cytoplasm. The catalysed reaction is tRNA(Leu) + L-leucine + ATP = L-leucyl-tRNA(Leu) + AMP + diphosphate. The chain is Leucine--tRNA ligase from Pseudomonas fluorescens (strain ATCC BAA-477 / NRRL B-23932 / Pf-5).